A 252-amino-acid chain; its full sequence is Phosphate import ATP-binding protein PstB 1 (252 aa).

The region spanning 6-247 (LQIRDLSVYY…PKRKETEDYI (242 aa)) is the ABC transporter domain. An ATP-binding site is contributed by 38 to 45 (GPSGSGKS).

It belongs to the ABC transporter superfamily. Phosphate importer (TC 3.A.1.7) family. In terms of assembly, the complex is composed of two ATP-binding proteins (PstB), two transmembrane proteins (PstC and PstA) and a solute-binding protein (PstS).

Its subcellular location is the cell membrane. It carries out the reaction phosphate(out) + ATP + H2O = ADP + 2 phosphate(in) + H(+). In terms of biological role, part of the ABC transporter complex PstSACB involved in phosphate import. Responsible for energy coupling to the transport system. The sequence is that of Phosphate import ATP-binding protein PstB 1 from Streptococcus pyogenes serotype M1.